Reading from the N-terminus, the 130-residue chain is Small ribosomal subunit protein uS8 (130 aa).

It belongs to the universal ribosomal protein uS8 family. As to quaternary structure, part of the 30S ribosomal subunit.

One of the primary rRNA binding proteins, it binds directly to 16S rRNA central domain where it helps coordinate assembly of the platform of the 30S subunit. In Thermococcus kodakarensis (strain ATCC BAA-918 / JCM 12380 / KOD1) (Pyrococcus kodakaraensis (strain KOD1)), this protein is Small ribosomal subunit protein uS8.